We begin with the raw amino-acid sequence, 215 residues long: LysM and putative peptidoglycan-binding domain-containing protein 2 (215 aa).

Positions 1–40 (MADSSPALSLREGGPRAPRPSAPSPPPRSRSGSESEEAEL) are disordered. The residue at position 2 (A2) is an N-acetylalanine. Phosphoserine is present on residues S5, S24, S33, and S57. Pro residues predominate over residues 17 to 28 (APRPSAPSPPPR). A LysM domain is found at 71-115 (VEHRVRAGDTLQGIALKYGVTMEQIKRANKLFTNDCIFLKKTLNI). 2 disordered regions span residues 132–175 (DSPE…EEVS) and 193–215 (AAKK…LYHS). Basic and acidic residues predominate over residues 196–205 (KLKEESRDEE).

This Homo sapiens (Human) protein is LysM and putative peptidoglycan-binding domain-containing protein 2 (LYSMD2).